The primary structure comprises 283 residues: Bifunctional protein FolD (283 aa).

Residues 165–167, S190, and I231 each bind NADP(+); that span reads GAS.

The protein belongs to the tetrahydrofolate dehydrogenase/cyclohydrolase family. Homodimer.

The catalysed reaction is (6R)-5,10-methylene-5,6,7,8-tetrahydrofolate + NADP(+) = (6R)-5,10-methenyltetrahydrofolate + NADPH. The enzyme catalyses (6R)-5,10-methenyltetrahydrofolate + H2O = (6R)-10-formyltetrahydrofolate + H(+). It functions in the pathway one-carbon metabolism; tetrahydrofolate interconversion. In terms of biological role, catalyzes the oxidation of 5,10-methylenetetrahydrofolate to 5,10-methenyltetrahydrofolate and then the hydrolysis of 5,10-methenyltetrahydrofolate to 10-formyltetrahydrofolate. This is Bifunctional protein FolD from Bordetella bronchiseptica (strain ATCC BAA-588 / NCTC 13252 / RB50) (Alcaligenes bronchisepticus).